We begin with the raw amino-acid sequence, 159 residues long: MKIKLVTVGKLKEKYLKEGIAEYSKRLSRFTKVEIIELADEKTPDKASPLENQQILSKEGERILSKVLDREFVIVLAIEGQQFPSEKFSKVIEDASVRGFSDITFIIGGSLGLSAKVKERANLLMSFGQLTLPHQLMRLVLMEQIYRAFMIQQGSPYHK.

S-adenosyl-L-methionine-binding positions include leucine 76, glycine 108, and 127 to 132 (FGQLTL).

Belongs to the RNA methyltransferase RlmH family. In terms of assembly, homodimer.

It is found in the cytoplasm. The enzyme catalyses pseudouridine(1915) in 23S rRNA + S-adenosyl-L-methionine = N(3)-methylpseudouridine(1915) in 23S rRNA + S-adenosyl-L-homocysteine + H(+). Functionally, specifically methylates the pseudouridine at position 1915 (m3Psi1915) in 23S rRNA. This Streptococcus gordonii (strain Challis / ATCC 35105 / BCRC 15272 / CH1 / DL1 / V288) protein is Ribosomal RNA large subunit methyltransferase H.